We begin with the raw amino-acid sequence, 309 residues long: Ribosomal protein L11 methyltransferase (309 aa).

Residues Thr-160, Gly-181, Asp-203, and Asn-245 each coordinate S-adenosyl-L-methionine.

The protein belongs to the methyltransferase superfamily. PrmA family.

The protein localises to the cytoplasm. It catalyses the reaction L-lysyl-[protein] + 3 S-adenosyl-L-methionine = N(6),N(6),N(6)-trimethyl-L-lysyl-[protein] + 3 S-adenosyl-L-homocysteine + 3 H(+). Its function is as follows. Methylates ribosomal protein L11. The protein is Ribosomal protein L11 methyltransferase of Caldanaerobacter subterraneus subsp. tengcongensis (strain DSM 15242 / JCM 11007 / NBRC 100824 / MB4) (Thermoanaerobacter tengcongensis).